The following is a 200-amino-acid chain: Dephospho-CoA kinase (200 aa).

The DPCK domain occupies 3-200 (RIGLTGGIGS…LIAEILTRIK (198 aa)). 11-16 (GSGKST) is a binding site for ATP.

This sequence belongs to the CoaE family.

The protein resides in the cytoplasm. It catalyses the reaction 3'-dephospho-CoA + ATP = ADP + CoA + H(+). Its pathway is cofactor biosynthesis; coenzyme A biosynthesis; CoA from (R)-pantothenate: step 5/5. Its function is as follows. Catalyzes the phosphorylation of the 3'-hydroxyl group of dephosphocoenzyme A to form coenzyme A. This chain is Dephospho-CoA kinase, found in Corynebacterium efficiens (strain DSM 44549 / YS-314 / AJ 12310 / JCM 11189 / NBRC 100395).